The primary structure comprises 471 residues: Paraneoplastic antigen-like protein 8A (471 aa).

2 disordered regions span residues 188 to 300 and 321 to 471; these read SAAG…EGSA and ASRG…PSAV. The segment covering 238-247 has biased composition (basic residues); that stretch reads HSRRKRQKKT. A compositionally biased stretch (low complexity) spans 256–269; it reads KKSQGSHSHSSASL. Over residues 270 to 287 the composition is skewed to basic and acidic residues; sequence KHPEADDGKNRERLEHVR.

This sequence belongs to the PNMA family.

This is Paraneoplastic antigen-like protein 8A (PNMA8A) from Bos taurus (Bovine).